Consider the following 715-residue polypeptide: Staphylocoagulase (715 aa).

The first 26 residues, 1–26, serve as a signal peptide directing secretion; sequence MKKQIISLGALAVASSLFTWDNKADA. Residues 306–327 are compositionally biased toward basic and acidic residues; it reads KYGESETKSPVVKEENKVEDPQ. Disordered stretches follow at residues 306–348 and 430–470; these read KYGE…EETT and QGTE…FNKT. The span at 431–443 shows a compositional bias: polar residues; it reads GTESTLKGIQGES. 8 repeat units span residues 495-521, 522-548, 549-575, 576-602, 603-629, 630-656, 657-683, and 684-710. An 8 X 27 AA tandem repeats of A-R-P-[RT]-[FQY]-[NK]-K-[PA]-S-[EK]-T-N-A-Y-N-V-T-T-[NH]-[QAG]-[DN]-G-[TQ]-[VA]-[ST]-Y-G region spans residues 495-710; that stretch reads ARPRFNKPSE…THADGTATYG (216 aa). The disordered stretch occupies residues 674-697; the sequence is THGNGQVSYGARPTYNKPSKTNAY.

Belongs to the staphylocoagulase family.

Staphylocoagulase is an extracellular protein which specifically forms a complex with human prothrombin. This complex named staphylothrombin can clot fibrinogen without any proteolytic cleavage of prothrombin. In Staphylococcus aureus, this protein is Staphylocoagulase.